Consider the following 578-residue polypeptide: Zinc finger protein with KRAB and SCAN domains 8 (578 aa).

The tract at residues Met1 to Glu20 is disordered. Position 12 is a phosphoserine (Ser12). Lys26 is covalently cross-linked (Glycyl lysine isopeptide (Lys-Gly) (interchain with G-Cter in SUMO2)). Residues Arg51–Ile133 form the SCAN box domain. Residues Ala158–Gln205 are disordered. Residues Asn165–Gln205 are compositionally biased toward polar residues. Glycyl lysine isopeptide (Lys-Gly) (interchain with G-Cter in SUMO2) cross-links involve residues Lys176 and Lys199. Position 201 is a phosphoserine (Ser201). The 97-residue stretch at Glu220–Pro316 folds into the KRAB domain. Glycyl lysine isopeptide (Lys-Gly) (interchain with G-Cter in SUMO2) cross-links involve residues Lys221, Lys272, and Lys288. 2 consecutive C2H2-type zinc fingers follow at residues His322–His344 and Tyr350–His372. Residues Lys374 and Lys376 each participate in a glycyl lysine isopeptide (Lys-Gly) (interchain with G-Cter in SUMO2) cross-link. 7 consecutive C2H2-type zinc fingers follow at residues Tyr378–His400, Tyr406–His428, Tyr434–His456, Tyr462–His484, Tyr490–His512, Tyr518–His540, and Tyr546–His568. Glycyl lysine isopeptide (Lys-Gly) (interchain with G-Cter in SUMO2) cross-links involve residues Lys413 and Lys441. A Glycyl lysine isopeptide (Lys-Gly) (interchain with G-Cter in SUMO2) cross-link involves residue Lys502. Lys572 is covalently cross-linked (Glycyl lysine isopeptide (Lys-Gly) (interchain with G-Cter in SUMO2)).

The protein belongs to the krueppel C2H2-type zinc-finger protein family.

The protein resides in the nucleus. Its function is as follows. May be involved in transcriptional regulation. The sequence is that of Zinc finger protein with KRAB and SCAN domains 8 (ZKSCAN8) from Pan paniscus (Pygmy chimpanzee).